The following is a 59-amino-acid chain: Small ribosomal subunit protein bS21 (59 aa).

The segment at 27–59 is disordered; the sequence is GLMAEMRKREHYEKPSVRRKKKAQARNKKKRYA. The segment covering 31 to 42 has biased composition (basic and acidic residues); it reads EMRKREHYEKPS. A compositionally biased stretch (basic residues) spans 43 to 59; sequence VRRKKKAQARNKKKRYA.

This sequence belongs to the bacterial ribosomal protein bS21 family.

The chain is Small ribosomal subunit protein bS21 from Carboxydothermus hydrogenoformans (strain ATCC BAA-161 / DSM 6008 / Z-2901).